The sequence spans 694 residues: MSGGEVVCSGWLRKSPPEKKLKRYAWKRRWFVLRSGRLTGDPDVLEYYKNDHAKKPIRIIDLNLCQQVDAGLTFNKKEFENSYIFDINTIDRIFYLVADSEEEMNKWVRCICDICGFNPTEEDPVKPPGSSLQAPADLPLAINTAPPSTQADSSSATLPPPYQLINVPPHLETLGIQEDPQDYLLLINCQSKKPEPTRTHADSAKSTSSETDCNDNVPSHKNPASSQSKHGMNGFFQQQMIYDSPPSRAPSASVDSSLYNLPRSYSHDVLPKVSPSSTEADGELYVFNTPSGTSSVETQMRHVSISYDIPPTPGNTYQIPRTFPEGTLGQTSKLDTIPDIPPPRPPKPHPAHDRSPVETCSIPRTASDTDSSYCIPTAGMSPSRSNTISTVDLNKLRKDASSQDCYDIPRAFPSDRSSSLEGFHNHFKVKNVLTVGSVSSEELDENYVPMNPNSPPRQHSSSFTEPIQEANYVPMTPGTFDFSSFGMQVPPPAHMGFRSSPKTPPRRPVPVADCEPPPVDRNLKPDRKVKPAPLEIKPLPEWEELQAPVRSPITRSFARDSSRFPMSPRPDSVHSTTSSSDSHDSEENYVPMNPNLSSEDPNLFGSNSLDGGSSPMIKPKGDKQVEYLDLDLDSGKSTPPRKQKSSGSGSSVADERVDYVVVDQQKTLALKSTREAWTDGRQSTESETPAKSVK.

N-acetylserine is present on Ser-2. The PH domain maps to Glu-5–Gly-116. Disordered stretches follow at residues Glu-122 to Leu-164 and Pro-194 to Gly-231. Positions Ala-145–Thr-157 are enriched in polar residues. Residues Pro-194 to Ser-203 are compositionally biased toward basic and acidic residues. The segment covering Ala-204–Gly-231 has biased composition (polar residues). Phosphoserine is present on residues Ser-251, Ser-253, Ser-266, and Ser-304. The tract at residues Phe-323–Asn-386 is disordered. Residues Ile-362–Asn-386 are compositionally biased toward polar residues. Position 387 is a phosphothreonine (Thr-387). A phosphoserine mark is found at Ser-402 and Ser-454. Disordered stretches follow at residues Ala-493–Ala-532 and Glu-544–Arg-656. Phosphoserine is present on Ala-547. Positions Pro-594–Gly-611 are enriched in polar residues. Residue Tyr-627 is modified to Phosphotyrosine. Thr-638 is subject to Phosphothreonine. The residue at position 651 (Ser-651) is a Phosphoserine. The residue at position 659 (Tyr-659) is a Phosphotyrosine. A disordered region spans residues Lys-671–Lys-694. Basic and acidic residues predominate over residues Ser-672–Thr-684. At Ser-683 the chain carries Phosphoserine. Residues Glu-685 to Lys-694 show a composition bias toward polar residues.

Belongs to the GAB family. In terms of assembly, identified in a complex containing FRS2, GRB2, GAB1, PIK3R1 and SOS1. Forms a tripartite complex containing GAB1, METTL13 and SPRY2. Within the complex interacts with METTL13. Interacts with GRB2 and with other SH2-containing proteins. Interacts with phosphorylated LAT2. Interacts with PTPRJ. Interacts (phosphorylated) with PTPN11. Interacts with HCK. In terms of processing, phosphorylated in response to FGFR1 activation. Phosphorylated on tyrosine residue(s) by the epidermal growth factor receptor (EGFR) and the insulin receptor (INSR). Tyrosine phosphorylation of GAB1 mediates interaction with several proteins that contain SH2 domains. Phosphorylated on tyrosine residues by HCK upon IL6 signaling.

Functionally, adapter protein that plays a role in intracellular signaling cascades triggered by activated receptor-type kinases. Plays a role in FGFR1 signaling. Probably involved in signaling by the epidermal growth factor receptor (EGFR) and the insulin receptor (INSR). Involved in the MET/HGF-signaling pathway. The polypeptide is GRB2-associated-binding protein 1 (GAB1) (Homo sapiens (Human)).